Reading from the N-terminus, the 172-residue chain is Interferon tau-3 (172 aa).

2 disulfide bridges follow: Cys1/Cys99 and Cys29/Cys139. A glycan (N-linked (GlcNAc...) asparagine) is linked at Asn78.

It belongs to the alpha/beta interferon family. IFN-alphaII subfamily. Constitutively and exclusively expressed in the mononuclear cells of the extraembryonic trophectoderm.

The protein resides in the secreted. In terms of biological role, paracrine hormone primarily responsible for maternal recognition of pregnancy. Interacts with endometrial receptors, probably type I interferon receptors, and blocks estrogen receptor expression, preventing the estrogen-induced increase in oxytocin receptor expression in the endometrium. This results in the suppression of the pulsatile endometrial release of the luteolytic hormone prostaglandin F2-alpha, hindering the regression of the corpus luteum (luteolysis) and therefore a return to ovarian cyclicity. This, and a possible direct effect of IFN-tau on prostaglandin synthesis, leads in turn to continued ovarian progesterone secretion, which stimulates the secretion by the endometrium of the nutrients required for the growth of the conceptus. In summary, displays particularly high antiviral and antiproliferative potency concurrently with particular weak cytotoxicity, high antiluteolytic activity and immunomodulatory properties. In contrast with other IFNs, IFN-tau is not virally inducible. The protein is Interferon tau-3 (IFNT3) of Bos taurus (Bovine).